The primary structure comprises 362 residues: tRNA 2-selenouridine synthase (362 aa).

Residues 14–137 enclose the Rhodanese domain; that stretch reads LANETPIIDV…LRQATIEMTN (124 aa). The S-selanylcysteine intermediate role is filled by C97.

Belongs to the SelU family. In terms of assembly, monomer.

It carries out the reaction 5-methylaminomethyl-2-thiouridine(34) in tRNA + selenophosphate + (2E)-geranyl diphosphate + H2O + H(+) = 5-methylaminomethyl-2-selenouridine(34) in tRNA + (2E)-thiogeraniol + phosphate + diphosphate. The catalysed reaction is 5-methylaminomethyl-2-thiouridine(34) in tRNA + (2E)-geranyl diphosphate = 5-methylaminomethyl-S-(2E)-geranyl-thiouridine(34) in tRNA + diphosphate. It catalyses the reaction 5-methylaminomethyl-S-(2E)-geranyl-thiouridine(34) in tRNA + selenophosphate + H(+) = 5-methylaminomethyl-2-(Se-phospho)selenouridine(34) in tRNA + (2E)-thiogeraniol. The enzyme catalyses 5-methylaminomethyl-2-(Se-phospho)selenouridine(34) in tRNA + H2O = 5-methylaminomethyl-2-selenouridine(34) in tRNA + phosphate. Its function is as follows. Involved in the post-transcriptional modification of the uridine at the wobble position (U34) of tRNA(Lys), tRNA(Glu) and tRNA(Gln). Catalyzes the conversion of 2-thiouridine (S2U-RNA) to 2-selenouridine (Se2U-RNA). Acts in a two-step process involving geranylation of 2-thiouridine (S2U) to S-geranyl-2-thiouridine (geS2U) and subsequent selenation of the latter derivative to 2-selenouridine (Se2U) in the tRNA chain. The chain is tRNA 2-selenouridine synthase from Proteus mirabilis (strain HI4320).